A 256-amino-acid polypeptide reads, in one-letter code: MEMKKRINLELRNQAPEEVTELVLDNCKSSNGEIEGLNDSFKELEFLSMANVQLTSLAKLPTLSKLRKLELSDNIISGGLEVLAERCPNLTYLNLSGNKIKDLGTVEALQNLKNLKSLDLFNCEITNLEDYRDSIFDLLQQITYLDGFDQEDNEAPDSEDDDDEGDEDDNDEDEDEAGPPGEYEEEDDEDDGGSDLGEGEEEEEVGLSYLMKEEIQDEDDDDDYVEEGGDEEEEAEGIRGEKRKRDPEDEGEEEDD.

LRR repeat units follow at residues 43–64, 65–87, and 89–110; these read ELEFLSMANVQLTSLAKLPTLS, KLRKLELSDNIISGGLEVLAERC, and NLTYLNLSGNKIKDLGTVEALQ. An LRRCT domain is found at 123–161; the sequence is CEITNLEDYRDSIFDLLQQITYLDGFDQEDNEAPDSEDD. The tract at residues 147-256 is disordered; it reads GFDQEDNEAP…PEDEGEEEDD (110 aa). Acidic residues-rich tracts occupy residues 148 to 205 and 215 to 235; these read FDQE…EEEV and IQDEDDDDDYVEEGGDEEEEA. The interval 204-256 is ZID domain; it reads EVGLSYLMKEEIQDEDDDDDYVEEGGDEEEEAEGIRGEKRKRDPEDEGEEEDD. Basic and acidic residues predominate over residues 236–247; it reads EGIRGEKRKRDP.

The protein belongs to the ANP32 family. Component of a SWR1-like complex. Interacts with H2A.Z/H2AZ1.

The protein resides in the cytoplasm. It localises to the nucleus. Its function is as follows. Histone chaperone that specifically mediates the genome-wide removal of histone H2A.Z/H2AZ1 from the nucleosome: removes H2A.Z/H2AZ1 from its normal sites of deposition, especially from enhancer and insulator regions. Not involved in deposition of H2A.Z/H2AZ1 in the nucleosome. May stabilize the evicted H2A.Z/H2AZ1-H2B dimer, thus shifting the equilibrium towards dissociation and the off-chromatin state. Inhibits activity of protein phosphatase 2A (PP2A). Does not inhibit protein phosphatase 1. May play a role in cerebellar development and synaptogenesis. This is Acidic leucine-rich nuclear phosphoprotein 32 family member E (ANP32E) from Gallus gallus (Chicken).